A 307-amino-acid polypeptide reads, in one-letter code: Ornithine carbamoyltransferase (307 aa).

Residues S50–T53, Q77, R101, and H128–Q131 contribute to the carbamoyl phosphate site. Residues N160, D224, and S228–M229 contribute to the L-ornithine site. Carbamoyl phosphate is bound by residues C264 to L265 and R292.

This sequence belongs to the aspartate/ornithine carbamoyltransferase superfamily. OTCase family.

The protein resides in the cytoplasm. The enzyme catalyses carbamoyl phosphate + L-ornithine = L-citrulline + phosphate + H(+). It participates in amino-acid biosynthesis; L-arginine biosynthesis; L-arginine from L-ornithine and carbamoyl phosphate: step 1/3. Reversibly catalyzes the transfer of the carbamoyl group from carbamoyl phosphate (CP) to the N(epsilon) atom of ornithine (ORN) to produce L-citrulline. In Clavibacter michiganensis subsp. michiganensis (strain NCPPB 382), this protein is Ornithine carbamoyltransferase.